Here is a 450-residue protein sequence, read N- to C-terminus: Ornithine decarboxylase (450 aa).

Lysine 59 bears the N6-(pyridoxal phosphate)lysine mark. Pyridoxal 5'-phosphate is bound by residues serine 190, glycine 227, and 264-267; that span reads EPGR. At serine 293 the chain carries Phosphoserine; by CK2. Substrate is bound at residue 321-322; it reads YD. The active-site Proton donor; shared with dimeric partner is the cysteine 350. Residue aspartate 351 coordinates substrate. A pyridoxal 5'-phosphate-binding site is contributed by tyrosine 379.

This sequence belongs to the Orn/Lys/Arg decarboxylase class-II family. As to quaternary structure, homodimer. Only the dimer is catalytically active, as the active sites are constructed of residues from both monomers. It depends on pyridoxal 5'-phosphate as a cofactor.

The enzyme catalyses L-ornithine + H(+) = putrescine + CO2. The protein operates within amine and polyamine biosynthesis; putrescine biosynthesis via L-ornithine pathway; putrescine from L-ornithine: step 1/1. Inhibited by antizymes (AZs) in response to polyamine levels. AZs inhibit the assembly of the functional homodimer by binding to ODC monomers and targeting them for ubiquitin-independent proteolytic destruction by the 26S proteasome. Its function is as follows. Catalyzes the first and rate-limiting step of polyamine biosynthesis that converts ornithine into putrescine, which is the precursor for the polyamines, spermidine and spermine. Polyamines are essential for cell proliferation and are implicated in cellular processes, ranging from DNA replication to apoptosis. This Gallus gallus (Chicken) protein is Ornithine decarboxylase (ODC1).